The following is a 91-amino-acid chain: DNA/RNA-binding protein Alba (91 aa).

It belongs to the histone-like Alba family.

It is found in the cytoplasm. The protein localises to the chromosome. Its function is as follows. Binds double-stranded DNA tightly but without sequence specificity. Involved in DNA compaction. In Methanoculleus marisnigri (strain ATCC 35101 / DSM 1498 / JR1), this protein is DNA/RNA-binding protein Alba.